A 2290-amino-acid polypeptide reads, in one-letter code: Protein Ycf2 (2290 aa).

An ATP-binding site is contributed by 1644 to 1651; that stretch reads GSIGTGRS.

This sequence belongs to the Ycf2 family.

Its subcellular location is the plastid. It localises to the chloroplast stroma. Probable ATPase of unknown function. Its presence in a non-photosynthetic plant (Epifagus virginiana) and experiments in tobacco indicate that it has an essential function which is probably not related to photosynthesis. This Nasturtium officinale (Watercress) protein is Protein Ycf2.